The sequence spans 202 residues: Ribonuclease HII (202 aa).

Positions 12-201 constitute an RNase H type-2 domain; the sequence is LLIAGVDEAG…VRQLKLFIPE (190 aa). The a divalent metal cation site is built by D18, E19, and D110.

It belongs to the RNase HII family. It depends on Mn(2+) as a cofactor. Mg(2+) serves as cofactor.

The protein localises to the cytoplasm. It carries out the reaction Endonucleolytic cleavage to 5'-phosphomonoester.. Endonuclease that specifically degrades the RNA of RNA-DNA hybrids. The polypeptide is Ribonuclease HII (Coxiella burnetii (strain CbuK_Q154) (Coxiella burnetii (strain Q154))).